Here is a 229-residue protein sequence, read N- to C-terminus: Meiotically up-regulated gene 31 protein (229 aa).

Disordered regions lie at residues Glu-16 to Lys-68 and Gly-189 to Ala-229.

It localises to the endoplasmic reticulum. In terms of biological role, has a role in meiosis. This Schizosaccharomyces pombe (strain 972 / ATCC 24843) (Fission yeast) protein is Meiotically up-regulated gene 31 protein (mug31).